We begin with the raw amino-acid sequence, 509 residues long: Solute carrier family 2, facilitated glucose transporter member 4 (509 aa).

Topologically, residues 1–24 are cytoplasmic; that stretch reads MPSGFQQIGSEDGEPPQQRVTGTL. The segment at 7–13 is interaction with SRFBP1; the sequence is QIGSEDG. S10 bears the Phosphoserine mark. A helical membrane pass occupies residues 25-45; sequence VLAVFSAVLGSLQFGYNIGVI. Residues 46 to 81 lie on the Extracellular side of the membrane; that stretch reads NAPQKVIEQSYNETWLGRQGPEGPSSIPPGTLTTLW. The N-linked (GlcNAc...) asparagine glycan is linked to N57. A helical transmembrane segment spans residues 82–102; the sequence is ALSVAIFSVGGMISSFLIGII. Over 103–111 the chain is Cytoplasmic; sequence SQWLGRKRA. Residues 112–132 form a helical membrane-spanning segment; it reads MLVNNVLAVLGGSLMGLANAA. Topologically, residues 133-142 are extracellular; sequence ASYEMLILGR. Residues 143–163 form a helical membrane-spanning segment; that stretch reads FLIGAYSGLTSGLVPMYVGEI. Topologically, residues 164–171 are cytoplasmic; that stretch reads APTHLRGA. The helical transmembrane segment at 172–192 threads the bilayer; that stretch reads LGTLNQLAIVIGILIAQVLGL. Q177 contacts D-glucose. At 193–201 the chain is on the extracellular side; the sequence is ESLLGTASL. The helical transmembrane segment at 202–222 threads the bilayer; the sequence is WPLLLGLTVLPALLQLVLLPF. Residue C223 is the site of S-palmitoyl cysteine attachment. The Cytoplasmic portion of the chain corresponds to 223–287; sequence CPESPRYLYI…LLGSRTHRQP (65 aa). S274 bears the Phosphoserine; by SGK1 mark. A helical membrane pass occupies residues 288-308; sequence LIIAVVLQLSQQLSGINAVFY. Residues 298 to 299 and N304 each bind D-glucose; that span reads QQ. The Extracellular portion of the chain corresponds to 309-323; sequence YSTSIFETAGVGQPA. A helical transmembrane segment spans residues 324-344; that stretch reads YATIGAGVVNTVFTLVSVLLV. N333 lines the D-glucose pocket. Topologically, residues 345–353 are cytoplasmic; that stretch reads ERAGRRTLH. Residues 354 to 374 form a helical membrane-spanning segment; the sequence is LLGLAGMCGCAILMTVALLLL. The Extracellular portion of the chain corresponds to 375 to 384; sequence ERVPAMSYVS. Residues 385–405 traverse the membrane as a helical segment; the sequence is IVAIFGFVAFFEIGPGPIPWF. Residues E396 and W404 each contribute to the D-glucose site. The Cytoplasmic segment spans residues 406-417; it reads IVAELFSQGPRP. A helical membrane pass occupies residues 418 to 438; the sequence is AAMAVAGFSNWTSNFIIGMGF. At 439-445 the chain is on the extracellular side; that stretch reads QYVAEAM. The chain crosses the membrane as a helical span at residues 446-466; the sequence is GPYVFLLFAVLLLGFFIFTFL. Topologically, residues 467-509 are cytoplasmic; that stretch reads RVPETRGRTFDQISAAFHRTPSLLEQEVKPSTELEYLGPDEND. The residue at position 486 (T486) is a Phosphothreonine. At S488 the chain carries Phosphoserine. The Dileucine internalization motif motif lies at 489 to 490; sequence LL.

The protein belongs to the major facilitator superfamily. Sugar transporter (TC 2.A.1.1) family. Glucose transporter subfamily. In terms of assembly, interacts with NDUFA9. Binds to DAXX. Interacts via its N-terminus with SRFBP1. Interacts with TRARG1; the interaction is required for proper SLC2A4 recycling after insulin stimulation. Post-translationally, sumoylated. In terms of processing, palmitoylated. Palmitoylation by ZDHHC7 controls the insulin-dependent translocation of GLUT4 to the plasma membrane. In terms of tissue distribution, skeletal and cardiac muscles; brown and white fat.

Its subcellular location is the cell membrane. It localises to the endomembrane system. The protein resides in the cytoplasm. The protein localises to the perinuclear region. The enzyme catalyses D-glucose(out) = D-glucose(in). Functionally, insulin-regulated facilitative glucose transporter, which plays a key role in removal of glucose from circulation. Response to insulin is regulated by its intracellular localization: in the absence of insulin, it is efficiently retained intracellularly within storage compartments in muscle and fat cells. Upon insulin stimulation, translocates from these compartments to the cell surface where it transports glucose from the extracellular milieu into the cell. This Homo sapiens (Human) protein is Solute carrier family 2, facilitated glucose transporter member 4.